A 711-amino-acid polypeptide reads, in one-letter code: Methionine--tRNA ligase (711 aa).

Positions 15-25 (PYTNGPIHIGH) match the 'HIGH' region motif. The Zn(2+) site is built by Cys147, Cys150, Cys160, and Cys163. The short motif at 336–340 (KLSTS) is the 'KMSKS' region element. Residue Thr339 participates in ATP binding. Residues 610–711 (DFAKMDIRIG…ADAPNGATVN (102 aa)) form the tRNA-binding domain.

It belongs to the class-I aminoacyl-tRNA synthetase family. MetG type 1 subfamily. As to quaternary structure, homodimer. The cofactor is Zn(2+).

It localises to the cytoplasm. The catalysed reaction is tRNA(Met) + L-methionine + ATP = L-methionyl-tRNA(Met) + AMP + diphosphate. Is required not only for elongation of protein synthesis but also for the initiation of all mRNA translation through initiator tRNA(fMet) aminoacylation. In Flavobacterium johnsoniae (strain ATCC 17061 / DSM 2064 / JCM 8514 / BCRC 14874 / CCUG 350202 / NBRC 14942 / NCIMB 11054 / UW101) (Cytophaga johnsonae), this protein is Methionine--tRNA ligase.